Here is a 92-residue protein sequence, read N- to C-terminus: Large ribosomal subunit protein uL24 (92 aa).

This sequence belongs to the universal ribosomal protein uL24 family. As to quaternary structure, part of the 50S ribosomal subunit.

Its function is as follows. One of two assembly initiator proteins, it binds directly to the 5'-end of the 23S rRNA, where it nucleates assembly of the 50S subunit. One of the proteins that surrounds the polypeptide exit tunnel on the outside of the subunit. The sequence is that of Large ribosomal subunit protein uL24 from Opitutus terrae (strain DSM 11246 / JCM 15787 / PB90-1).